The sequence spans 67 residues: Mitotic-spindle organizing protein 1A (67 aa).

Belongs to the MOZART1 family. In terms of assembly, part of the gamma-tubulin complex. Interacts with GIP1 and GCP3. Mostly expressed in siliques and flowers, and, to a lower extent, in leaves, roots and seedlings, with highest levels in young tissues, meristematic cells, and the vasculature.

Its subcellular location is the cytoplasm. It is found in the cytoskeleton. It localises to the microtubule organizing center. The protein resides in the spindle. The protein localises to the nucleus. Its subcellular location is the phragmoplast. It is found in the nucleus envelope. Its function is as follows. Required for gamma-tubulin complex recruitment to the microtubule organizing centers (MTOCs). During mitosis, modulates gamma-tubulin complex localization, spindle stability and chromosomal segregation. Necessary for gametophyte development and embryogenesis. This Arabidopsis thaliana (Mouse-ear cress) protein is Mitotic-spindle organizing protein 1A (GIP2).